The following is a 243-amino-acid chain: MPIDKKQEKNFTNKIQEEGQKSLDTSLTQEIEILEEKLNKNPDHKGTINTTPNDNSTSKNSKDKDFKFKKKTNSQNFKKNANKKPEKEFEEKIVNIARVTNVVKGGRRFSFAAVVVVGDKKGRVGYGHGKALEVPDAIKKAVKDAQNNLIRVPIINKSTVPHEQWAKFLASKVMLKPAPKGKGIIASNSVRAVVELAGYTDIYTKSYGSRSKENVVKAVFDALKKLRYAEDIAKMRDLDIKDL.

2 stretches are compositionally biased toward basic and acidic residues: residues methionine 1–lysine 21 and leucine 34–glycine 46. The disordered stretch occupies residues methionine 1–proline 85. An S5 DRBM domain is found at phenylalanine 89 to valine 152.

The protein belongs to the universal ribosomal protein uS5 family. In terms of assembly, part of the 30S ribosomal subunit. Contacts proteins S4 and S8.

Its function is as follows. With S4 and S12 plays an important role in translational accuracy. Functionally, located at the back of the 30S subunit body where it stabilizes the conformation of the head with respect to the body. This is Small ribosomal subunit protein uS5 from Mycoplasma mobile (strain ATCC 43663 / 163K / NCTC 11711) (Mesomycoplasma mobile).